The chain runs to 88 residues: Small ribosomal subunit protein uS15 (88 aa).

It belongs to the universal ribosomal protein uS15 family. As to quaternary structure, part of the 30S ribosomal subunit. Forms a bridge to the 50S subunit in the 70S ribosome, contacting the 23S rRNA.

Its function is as follows. One of the primary rRNA binding proteins, it binds directly to 16S rRNA where it helps nucleate assembly of the platform of the 30S subunit by binding and bridging several RNA helices of the 16S rRNA. Forms an intersubunit bridge (bridge B4) with the 23S rRNA of the 50S subunit in the ribosome. In Francisella tularensis subsp. tularensis (strain FSC 198), this protein is Small ribosomal subunit protein uS15.